The primary structure comprises 212 residues: Protein Thf1 (212 aa).

The stretch at 179–201 forms a coiled coil; the sequence is ERMEQAVELMQETLAADRRKKEK.

It belongs to the THF1 family.

May be involved in photosynthetic membrane biogenesis. The polypeptide is Protein Thf1 (Parasynechococcus marenigrum (strain WH8102)).